A 162-amino-acid chain; its full sequence is HTH-type transcriptional regulator IscR (162 aa).

Residues 2 to 131 (RLTSKGRYAV…NNITLGELVN (130 aa)) enclose the HTH rrf2-type domain. The H-T-H motif DNA-binding region spans 28 to 51 (LADISERQGISLSYLEQLFSRLRK). Cysteine 92, cysteine 98, and cysteine 104 together coordinate [2Fe-2S] cluster. Residues 141 to 162 (RQHNEAHRPTRAQDAIDVKLRA) are disordered.

[2Fe-2S] cluster serves as cofactor.

In terms of biological role, regulates the transcription of several operons and genes involved in the biogenesis of Fe-S clusters and Fe-S-containing proteins. In Cronobacter sakazakii (strain ATCC BAA-894) (Enterobacter sakazakii), this protein is HTH-type transcriptional regulator IscR.